Here is a 194-residue protein sequence, read N- to C-terminus: MKVTKAELDCVAVKPEQYPNSPLPEVALAGRSNVGKSSFINKMINRKKLARTSQRPGKTQTLNFYNINDILHFVDVPGYGFAKVSKKDREAWGRMIETYLQQRGQLKAVLQIIDIRHDPTKDDQLMYDWLKHFEIPVIIIATKCDKIPKGKWPKHVKNIASVLEKDGGDPIVIFSSETGVGKDEAWKAILHAIS.

One can recognise an EngB-type G domain in the interval 22 to 194 (PLPEVALAGR…AWKAILHAIS (173 aa)). Residues 30-37 (GRSNVGKS), 57-61 (GKTQT), 75-78 (DVPG), 142-145 (TKCD), and 174-176 (FSS) contribute to the GTP site. Mg(2+) is bound by residues Ser37 and Thr59.

It belongs to the TRAFAC class TrmE-Era-EngA-EngB-Septin-like GTPase superfamily. EngB GTPase family. The cofactor is Mg(2+).

Necessary for normal cell division and for the maintenance of normal septation. The chain is Probable GTP-binding protein EngB from Halalkalibacterium halodurans (strain ATCC BAA-125 / DSM 18197 / FERM 7344 / JCM 9153 / C-125) (Bacillus halodurans).